Here is an 867-residue protein sequence, read N- to C-terminus: Protein argonaute-3 (867 aa).

Positions 1–83 (MSGRGNLLSL…IDTLKTDDHT (83 aa)) are necessary and sufficient for interaction with krimp. An interaction with papi region spans residues 1 to 289 (MSGRGNLLSL…CDVSHRILCQ (289 aa)). A symmetric dimethylarginine mark is found at Arg4, Arg68, and Arg70. In terms of domain architecture, PAZ spans 291–402 (TVLEMLVDLY…LIPELCYLTG (112 aa)). The 288-residue stretch at 566–853 (MVVCICHNRR…LAYLIGQSIQ (288 aa)) folds into the Piwi domain.

It belongs to the argonaute family. Piwi subfamily. As to quaternary structure, component of the ping-pong piRNA processing (4P) complex consisting of krimp, aub and AGO3. Interacts (via N-terminus when not methylated on arginine residues) with krimp (via non-canonical tudor domain); this interaction leads to symmetrical dimethylation on AGO3 arginine residues and its subsequent dissociation from krimp. Krimp associated AGO3 is mostly free of piRNA binding and the interaction plays an important role in the loading of AGO3 with piRNAs; piRNA binding may stimulate dissociation of the two proteins. May form part of a piRNA processing complex consisting of tud, aub and AGO3. Interacts (when symmetrically dimethylated on arginine residues) with tud. Forms a complex with smg, twin, aub, nos mRNA and piRNAs that target the nos 3'-untranslated region, in early embryos. Interacts (via the N-terminal region when symmetrically methylated on arginine residues) with papi (via C-terminus); this interaction is RNA-independent and may be required for AGO3 localization to the nuage. Interacts with TER94 and tral. In terms of processing, symmetrically dimethylated on Arg-4, Arg-68 and Arg-70, most likely by csul/PRMT5/DART5. Methylation state probably functions as an indicator of its piRNA binding state. As to expression, in ovary, expressed in germline stem cells, germline cyst cells, nurse cells and oocytes during early stages. Also found in the somatic cap cells of the germarium. In testis, expressed in germline stem cells, primary gonial cells and early spermatocytes. No expression detected in the somatic hub cells at the apical tip of the testis (at protein level). Expressed in neurons throughout the adult brain and in the mushroom body subdivision in the peduncle. In the mushroom body, expressed only in gamma and core alpha-beta neurons.

It is found in the cytoplasm. The protein localises to the perinuclear region. The protein resides in the cytoplasmic ribonucleoprotein granule. Its function is as follows. Component of the perinuclear meiotic nuage, a germline-specific subcellular membraneless ribonucleoprotein compartment involved in production of transposable element-repressing Piwi-interacting RNA (piRNA)-induced silencing complexes (piRISCs), which are essential for maintaining germline integrity during oogenesis. Acts via the Piwi-interacting RNA (piRNA) metabolic process, which mediates the repression of transposable elements during meiosis by forming complexes composed of piRNAs and Piwi proteins and governs the methylation and subsequent repression of transposons. Piwi protein that directly binds piRNAs, a class of 24 to 30 nucleotide RNAs that are generated by a Dicer-independent mechanism and are primarily derived from transposons and other repeated sequence elements. Associates predominantly with sense piRNAs that contain adenine at nucleotide 10, but shows no preference for uridine at the 5' end. Shows RNA cleavage or slicer activity. Together with Piwi protein aub recruited to subregions of the perinuclear nuage by krimp, which coordinates their activity in the ping-pong amplification step of secondary piRNA biogenesis. Krimp recruits piRNA bound aub and unbound AGO3, bringing them into close proximity to facilitate the loading onto AGO3 of freshly cut piRNAs generated by aub cleavage of target sequences; krimp recognizes the piRNA loading state of the Piwi proteins via symmetrically dimethylated arginine modification in their N-terminus. Important for asymmetric ping-pong amplification to bias production towards antisense piRNAs capable of silencing transposable elements. In testis, associates with Su(Ste) and AT-chX-1 piRNAs mostly produced from antisense precursors. In the germline, acts to amplify pools of antisense piRNAs, among others Su(Ste), AT-chX-1 and roo, and to limit sense piRNA accumulation. Forms a complex with smg, twin, aub and specific piRNAs that targets nos mRNA (and probably other maternal mRNAS) for deadenylation promoting its decay during early embryogenesis. Involved in transposon silencing in the adult brain. The polypeptide is Protein argonaute-3 (Drosophila melanogaster (Fruit fly)).